The following is a 1368-amino-acid chain: DNA-directed RNA polymerase subunit beta (1368 aa).

It belongs to the RNA polymerase beta chain family. As to quaternary structure, the RNAP catalytic core consists of 2 alpha, 1 beta, 1 beta' and 1 omega subunit. When a sigma factor is associated with the core the holoenzyme is formed, which can initiate transcription.

The catalysed reaction is RNA(n) + a ribonucleoside 5'-triphosphate = RNA(n+1) + diphosphate. Functionally, DNA-dependent RNA polymerase catalyzes the transcription of DNA into RNA using the four ribonucleoside triphosphates as substrates. In Burkholderia cenocepacia (strain HI2424), this protein is DNA-directed RNA polymerase subunit beta.